A 673-amino-acid chain; its full sequence is DNA ligase (673 aa).

NAD(+)-binding positions include 34 to 38 (DAEYD), 83 to 84 (SL), and E116. The active-site N6-AMP-lysine intermediate is K118. Residues R139, E176, K293, and K317 each coordinate NAD(+). Zn(2+) is bound by residues C411, C414, C429, and C435. Positions 595–673 (NQQNPFFGKT…EDEFLKWVNS (79 aa)) constitute a BRCT domain.

This sequence belongs to the NAD-dependent DNA ligase family. LigA subfamily. It depends on Mg(2+) as a cofactor. Mn(2+) is required as a cofactor.

The enzyme catalyses NAD(+) + (deoxyribonucleotide)n-3'-hydroxyl + 5'-phospho-(deoxyribonucleotide)m = (deoxyribonucleotide)n+m + AMP + beta-nicotinamide D-nucleotide.. Functionally, DNA ligase that catalyzes the formation of phosphodiester linkages between 5'-phosphoryl and 3'-hydroxyl groups in double-stranded DNA using NAD as a coenzyme and as the energy source for the reaction. It is essential for DNA replication and repair of damaged DNA. This Legionella pneumophila subsp. pneumophila (strain Philadelphia 1 / ATCC 33152 / DSM 7513) protein is DNA ligase.